A 271-amino-acid polypeptide reads, in one-letter code: Plasmanylethanolamine desaturase 1 (271 aa).

A run of 3 helical transmembrane segments spans residues 48–68 (WCCVVLCFSLIAHNMAHLLLL), 75–95 (PLVMLGMVAGALLADFLSGLV), and 162–182 (VLEQLYPWECFVFCLIIFGTF). Residues 187 to 191 (HKWSH) carry the Histidine box-1 motif. A Histidine box-2 motif is present at residues 214–218 (HHRIH).

It belongs to the fatty acid desaturase CarF family.

The protein localises to the endoplasmic reticulum membrane. The catalysed reaction is a 1-(1,2-saturated alkyl)-2-acyl-sn-glycero-3-phosphoethanolamine + 2 Fe(II)-[cytochrome b5] + O2 + 2 H(+) = a 1-O-(1Z-alkenyl)-2-acyl-sn-glycero-3-phosphoethanolamine + 2 Fe(III)-[cytochrome b5] + 2 H2O. The enzyme catalyses a 1-O-hexadecyl-2-acyl-sn-glycero-3-phosphoethanolamine + 2 Fe(II)-[cytochrome b5] + O2 + 2 H(+) = a 1-O-(1Z-hexadecenyl)-2-acyl-sn-glycero-3-phosphoethanolamine + 2 Fe(III)-[cytochrome b5] + 2 H2O. It catalyses the reaction a 1-O-octadecyl-2-acyl-sn-glycero-3-phosphoethanolamine + 2 Fe(II)-[cytochrome b5] + O2 + 2 H(+) = a 1-O-(1Z-octadecenyl)-2-acyl-sn-glycero-3-phosphoethanolamine + 2 Fe(III)-[cytochrome b5] + 2 H2O. It carries out the reaction a 1-O-(9Z-octadecenyl)-2-acyl-sn-glycero-3-phosphoethanolamine + 2 Fe(II)-[cytochrome b5] + O2 + 2 H(+) = a 1-O-(1Z,9Z-octadecadienyl)-2-acyl-sn-glycero-3-phosphoethanolamine + 2 Fe(III)-[cytochrome b5] + 2 H2O. It participates in lipid metabolism; fatty acid metabolism. Plasmanylethanolamine desaturase involved in plasmalogen biogenesis in the endoplasmic reticulum membrane. Plasmalogens are glycerophospholipids with a hydrocarbon chain linked by a vinyl ether bond at the glycerol sn-1 position, and are involved in antioxidative and signaling mechanisms. The polypeptide is Plasmanylethanolamine desaturase 1 (Bos taurus (Bovine)).